Consider the following 235-residue polypeptide: Small ribosomal subunit protein uS2 (235 aa).

The protein belongs to the universal ribosomal protein uS2 family.

In Thermoanaerobacter pseudethanolicus (strain ATCC 33223 / 39E) (Clostridium thermohydrosulfuricum), this protein is Small ribosomal subunit protein uS2.